A 127-amino-acid chain; its full sequence is Protein HI_1253 (127 aa).

4 helical membrane passes run 13-33, 61-81, 82-102, and 107-127; these read VIML…LLVI, LIVS…WWLV, AKFA…SKKV, and SIFF…AYLK.

Belongs to the SirB2 family.

Its subcellular location is the cell inner membrane. In Haemophilus influenzae (strain ATCC 51907 / DSM 11121 / KW20 / Rd), this protein is Protein HI_1253.